The following is a 1241-amino-acid chain: DNA-directed RNA polymerase subunit beta (1241 aa).

Belongs to the RNA polymerase beta chain family. The RNAP catalytic core consists of 2 alpha, 1 beta, 1 beta' and 1 omega subunit. When a sigma factor is associated with the core the holoenzyme is formed, which can initiate transcription.

The enzyme catalyses RNA(n) + a ribonucleoside 5'-triphosphate = RNA(n+1) + diphosphate. DNA-dependent RNA polymerase catalyzes the transcription of DNA into RNA using the four ribonucleoside triphosphates as substrates. This is DNA-directed RNA polymerase subunit beta from Clostridium botulinum (strain Alaska E43 / Type E3).